The following is a 284-amino-acid chain: Pantothenate synthetase (284 aa).

34–41 (MGALHAGH) serves as a coordination point for ATP. The active-site Proton donor is the histidine 41. (R)-pantoate is bound at residue glutamine 65. Glutamine 65 provides a ligand contact to beta-alanine. 151 to 154 (GEKD) contacts ATP. Position 157 (glutamine 157) interacts with (R)-pantoate. ATP-binding positions include leucine 180 and 188–191 (MSSR).

Belongs to the pantothenate synthetase family. In terms of assembly, homodimer.

It is found in the cytoplasm. The enzyme catalyses (R)-pantoate + beta-alanine + ATP = (R)-pantothenate + AMP + diphosphate + H(+). The protein operates within cofactor biosynthesis; (R)-pantothenate biosynthesis; (R)-pantothenate from (R)-pantoate and beta-alanine: step 1/1. Catalyzes the condensation of pantoate with beta-alanine in an ATP-dependent reaction via a pantoyl-adenylate intermediate. This chain is Pantothenate synthetase, found in Paramagnetospirillum magneticum (strain ATCC 700264 / AMB-1) (Magnetospirillum magneticum).